The primary structure comprises 493 residues: Glutamyl-tRNA(Gln) amidotransferase subunit A (493 aa).

Catalysis depends on charge relay system residues K79 and S159. Residue S183 is the Acyl-ester intermediate of the active site.

It belongs to the amidase family. GatA subfamily. Heterotrimer of A, B and C subunits.

The catalysed reaction is L-glutamyl-tRNA(Gln) + L-glutamine + ATP + H2O = L-glutaminyl-tRNA(Gln) + L-glutamate + ADP + phosphate + H(+). In terms of biological role, allows the formation of correctly charged Gln-tRNA(Gln) through the transamidation of misacylated Glu-tRNA(Gln) in organisms which lack glutaminyl-tRNA synthetase. The reaction takes place in the presence of glutamine and ATP through an activated gamma-phospho-Glu-tRNA(Gln). This chain is Glutamyl-tRNA(Gln) amidotransferase subunit A, found in Brucella ovis (strain ATCC 25840 / 63/290 / NCTC 10512).